The primary structure comprises 61 residues: uncharacterized protein (61 aa).

This is an uncharacterized protein from Archaeoglobus fulgidus (strain ATCC 49558 / DSM 4304 / JCM 9628 / NBRC 100126 / VC-16).